The following is a 229-amino-acid chain: Potassium/proton antiporter CemA (229 aa).

The next 4 membrane-spanning stretches (helical) occupy residues 7–27 (FTSL…SLSF), 114–134 (IICF…LVIL), 145–165 (LSDT…IGFH), and 189–209 (ILSS…KFWV).

The protein belongs to the CemA family.

It is found in the plastid. It localises to the chloroplast inner membrane. It catalyses the reaction K(+)(in) + H(+)(out) = K(+)(out) + H(+)(in). Contributes to K(+)/H(+) antiport activity by supporting proton efflux to control proton extrusion and homeostasis in chloroplasts in a light-dependent manner to modulate photosynthesis. Prevents excessive induction of non-photochemical quenching (NPQ) under continuous-light conditions. Indirectly promotes efficient inorganic carbon uptake into chloroplasts. This is Potassium/proton antiporter CemA from Daucus carota (Wild carrot).